The following is a 370-amino-acid chain: Queuine tRNA-ribosyltransferase (370 aa).

The Proton acceptor role is filled by Asp-89. Substrate-binding positions include Asp-89–Phe-93, Asp-143, Gln-187, and Gly-214. The tract at residues Gly-245 to Asp-251 is RNA binding. Asp-264 serves as the catalytic Nucleophile. The interval Thr-269–Arg-273 is RNA binding; important for wobble base 34 recognition. Residues Cys-302, Cys-304, Cys-307, and His-333 each contribute to the Zn(2+) site.

Belongs to the queuine tRNA-ribosyltransferase family. As to quaternary structure, homodimer. Within each dimer, one monomer is responsible for RNA recognition and catalysis, while the other monomer binds to the replacement base PreQ1. The cofactor is Zn(2+).

The catalysed reaction is 7-aminomethyl-7-carbaguanine + guanosine(34) in tRNA = 7-aminomethyl-7-carbaguanosine(34) in tRNA + guanine. Its pathway is tRNA modification; tRNA-queuosine biosynthesis. Catalyzes the base-exchange of a guanine (G) residue with the queuine precursor 7-aminomethyl-7-deazaguanine (PreQ1) at position 34 (anticodon wobble position) in tRNAs with GU(N) anticodons (tRNA-Asp, -Asn, -His and -Tyr). Catalysis occurs through a double-displacement mechanism. The nucleophile active site attacks the C1' of nucleotide 34 to detach the guanine base from the RNA, forming a covalent enzyme-RNA intermediate. The proton acceptor active site deprotonates the incoming PreQ1, allowing a nucleophilic attack on the C1' of the ribose to form the product. After dissociation, two additional enzymatic reactions on the tRNA convert PreQ1 to queuine (Q), resulting in the hypermodified nucleoside queuosine (7-(((4,5-cis-dihydroxy-2-cyclopenten-1-yl)amino)methyl)-7-deazaguanosine). In Azoarcus sp. (strain BH72), this protein is Queuine tRNA-ribosyltransferase.